Consider the following 457-residue polypeptide: Transcription factor PCF7 (457 aa).

Residues 58–84 (STLHYLLQEKERAQQAHEQLQIYQQQQ) are a coiled coil. The tract at residues 95–121 (RQPASRGPGGGGGGGDGGGSSGESTPV) is disordered. Gly residues predominate over residues 101–115 (GPGGGGGGGDGGGSS). Residues 140 to 198 (RKDRHSKVCTARGLRDRRVRLAAHTAIRFYDVQDRLGYDRPSKAVDWLMRNAKAAIDEL) form the TCP domain. Disordered stretches follow at residues 199-231 (PDRAEAPPPPAAASTEQPEGTEQANSTSYGFGN) and 263-299 (KSLFPSSSTASGAASAGHDEYRGSPPDLLSRTTSNQQ). Over residues 212–230 (STEQPEGTEQANSTSYGFG) the composition is skewed to polar residues. The span at 268–278 (SSSTASGAASA) shows a compositional bias: low complexity.

In terms of assembly, forms homodimers and heterodimers.

It localises to the nucleus. Its function is as follows. Transcription activator. Binds the promoter core sequence 5'-GGNCC-3'. This is Transcription factor PCF7 (PCF7) from Oryza sativa subsp. indica (Rice).